The following is a 188-amino-acid chain: Elongation factor P (188 aa).

Belongs to the elongation factor P family.

It localises to the cytoplasm. The protein operates within protein biosynthesis; polypeptide chain elongation. Involved in peptide bond synthesis. Stimulates efficient translation and peptide-bond synthesis on native or reconstituted 70S ribosomes in vitro. Probably functions indirectly by altering the affinity of the ribosome for aminoacyl-tRNA, thus increasing their reactivity as acceptors for peptidyl transferase. The protein is Elongation factor P of Rhodopseudomonas palustris (strain TIE-1).